Consider the following 43-residue polypeptide: Protein PsbN (43 aa).

The helical transmembrane segment at 7–29 (VAIFLSGLLVSFTGYALYTAFGQ) threads the bilayer.

It belongs to the PsbN family.

Its subcellular location is the plastid. It localises to the chloroplast thylakoid membrane. Functionally, may play a role in photosystem I and II biogenesis. The polypeptide is Protein PsbN (Draba nemorosa (Woodland whitlowgrass)).